A 53-amino-acid polypeptide reads, in one-letter code: Sec-independent protein translocase protein TatA (53 aa).

Residues 1-21 form a helical membrane-spanning segment; it reads MGMSFSHLLIVLLIIFVLFGA.

The protein belongs to the TatA/E family. As to quaternary structure, the Tat system comprises two distinct complexes: a TatABC complex, containing multiple copies of TatA, TatB and TatC subunits, and a separate TatA complex, containing only TatA subunits. Substrates initially bind to the TatABC complex, which probably triggers association of the separate TatA complex to form the active translocon.

It localises to the cell inner membrane. Functionally, part of the twin-arginine translocation (Tat) system that transports large folded proteins containing a characteristic twin-arginine motif in their signal peptide across membranes. TatA could form the protein-conducting channel of the Tat system. This is Sec-independent protein translocase protein TatA from Rickettsia africae (strain ESF-5).